Here is a 113-residue protein sequence, read N- to C-terminus: Small ribosomal subunit protein bS6 (113 aa).

This sequence belongs to the bacterial ribosomal protein bS6 family.

Functionally, binds together with bS18 to 16S ribosomal RNA. The sequence is that of Small ribosomal subunit protein bS6 from Flavobacterium johnsoniae (strain ATCC 17061 / DSM 2064 / JCM 8514 / BCRC 14874 / CCUG 350202 / NBRC 14942 / NCIMB 11054 / UW101) (Cytophaga johnsonae).